The chain runs to 242 residues: Type III pantothenate kinase (242 aa).

Residue Asp7–Lys14 participates in ATP binding. Substrate is bound by residues Tyr91 and Gly98 to Arg101. Asp100 serves as the catalytic Proton acceptor. Thr121 contacts ATP. Thr171 provides a ligand contact to substrate.

It belongs to the type III pantothenate kinase family. Homodimer. The cofactor is NH4(+). Requires K(+) as cofactor.

It is found in the cytoplasm. The catalysed reaction is (R)-pantothenate + ATP = (R)-4'-phosphopantothenate + ADP + H(+). Its pathway is cofactor biosynthesis; coenzyme A biosynthesis; CoA from (R)-pantothenate: step 1/5. In terms of biological role, catalyzes the phosphorylation of pantothenate (Pan), the first step in CoA biosynthesis. In Xanthomonas axonopodis pv. citri (strain 306), this protein is Type III pantothenate kinase.